Reading from the N-terminus, the 422-residue chain is Gamma-glutamyl phosphate reductase (422 aa).

It belongs to the gamma-glutamyl phosphate reductase family.

It localises to the cytoplasm. It carries out the reaction L-glutamate 5-semialdehyde + phosphate + NADP(+) = L-glutamyl 5-phosphate + NADPH + H(+). It participates in amino-acid biosynthesis; L-proline biosynthesis; L-glutamate 5-semialdehyde from L-glutamate: step 2/2. In terms of biological role, catalyzes the NADPH-dependent reduction of L-glutamate 5-phosphate into L-glutamate 5-semialdehyde and phosphate. The product spontaneously undergoes cyclization to form 1-pyrroline-5-carboxylate. This is Gamma-glutamyl phosphate reductase from Chloroflexus aggregans (strain MD-66 / DSM 9485).